The primary structure comprises 729 residues: Putative cyclic nucleotide-gated ion channel 19 (729 aa).

Topologically, residues Met1–Val172 are cytoplasmic. The segment at Ser52–Pro82 is disordered. Residues Pro67–Val81 are compositionally biased toward low complexity. A helical membrane pass occupies residues Leu173–Ile193. The Extracellular segment spans residues Gln194–Lys208. Residues Val209 to Phe229 form a helical membrane-spanning segment. At Arg230–Lys261 the chain is on the cytoplasmic side. Residues Phe262–Pro282 form a helical membrane-spanning segment. At Leu283–Gln295 the chain is on the extracellular side. The helical transmembrane segment at Ile296–Leu316 threads the bilayer. Topologically, residues Ala317 to Asn332 are cytoplasmic. Residues Phe333 to Leu353 traverse the membrane as a helical segment. The Extracellular portion of the chain corresponds to Ser354–Ser451. The chain crosses the membrane as a helical span at residues Tyr452–Ala472. Topologically, residues Arg473–Arg729 are cytoplasmic. A nucleoside 3',5'-cyclic phosphate is bound by residues Ile560–Leu677 and Glu625. Positions Phe678–Glu694 are calmodulin-binding. In terms of domain architecture, IQ spans Arg699 to Asn728.

The protein belongs to the cyclic nucleotide-gated cation channel (TC 1.A.1.5) family. In terms of assembly, homotetramer or heterotetramer.

It is found in the cell membrane. Its function is as follows. Putative cyclic nucleotide-gated ion channel. This is Putative cyclic nucleotide-gated ion channel 19 (CNGC19) from Arabidopsis thaliana (Mouse-ear cress).